The sequence spans 183 residues: Putative 3-methyladenine DNA glycosylase (183 aa).

The protein belongs to the DNA glycosylase MPG family.

This is Putative 3-methyladenine DNA glycosylase from Rickettsia africae (strain ESF-5).